A 219-amino-acid chain; its full sequence is Thymidylate kinase (219 aa).

An ATP-binding site is contributed by 7 to 14 (GIDGAGKS).

Belongs to the thymidylate kinase family.

The catalysed reaction is dTMP + ATP = dTDP + ADP. Phosphorylation of dTMP to form dTDP in both de novo and salvage pathways of dTTP synthesis. The chain is Thymidylate kinase from Chlorobium phaeobacteroides (strain DSM 266 / SMG 266 / 2430).